The primary structure comprises 311 residues: tRNA-cytidine(32) 2-sulfurtransferase (311 aa).

The PP-loop motif motif lies at 47–52 (SGGKDS). Residues Cys-122, Cys-125, and Cys-213 each contribute to the [4Fe-4S] cluster site.

The protein belongs to the TtcA family. As to quaternary structure, homodimer. Mg(2+) is required as a cofactor. [4Fe-4S] cluster serves as cofactor.

The protein resides in the cytoplasm. The enzyme catalyses cytidine(32) in tRNA + S-sulfanyl-L-cysteinyl-[cysteine desulfurase] + AH2 + ATP = 2-thiocytidine(32) in tRNA + L-cysteinyl-[cysteine desulfurase] + A + AMP + diphosphate + H(+). The protein operates within tRNA modification. Functionally, catalyzes the ATP-dependent 2-thiolation of cytidine in position 32 of tRNA, to form 2-thiocytidine (s(2)C32). The sulfur atoms are provided by the cysteine/cysteine desulfurase (IscS) system. The chain is tRNA-cytidine(32) 2-sulfurtransferase from Escherichia coli O139:H28 (strain E24377A / ETEC).